The chain runs to 459 residues: Bifunctional protein GlmU (459 aa).

Residues 1-230 (MSNRFAVILA…FDETLGVNDR (230 aa)) are pyrophosphorylase. UDP-N-acetyl-alpha-D-glucosamine contacts are provided by residues 9–12 (LAAG), Lys23, Gln73, and 78–79 (GT). Asp103 provides a ligand contact to Mg(2+). UDP-N-acetyl-alpha-D-glucosamine-binding residues include Gly140, Glu155, Asn170, and Asn228. Asn228 lines the Mg(2+) pocket. Positions 231-251 (VALSQAEIIMKNRINRKNMVN) are linker. Residues 252–459 (GVTIIDPSNT…VDQLLNKKKS (208 aa)) form an N-acetyltransferase region. UDP-N-acetyl-alpha-D-glucosamine-binding residues include Arg333 and Lys351. His363 functions as the Proton acceptor in the catalytic mechanism. UDP-N-acetyl-alpha-D-glucosamine is bound by residues Tyr366 and Asn377. Acetyl-CoA is bound by residues 386–387 (NY), Ala423, and Arg440.

It in the N-terminal section; belongs to the N-acetylglucosamine-1-phosphate uridyltransferase family. The protein in the C-terminal section; belongs to the transferase hexapeptide repeat family. In terms of assembly, homotrimer. Requires Mg(2+) as cofactor.

Its subcellular location is the cytoplasm. It catalyses the reaction alpha-D-glucosamine 1-phosphate + acetyl-CoA = N-acetyl-alpha-D-glucosamine 1-phosphate + CoA + H(+). The enzyme catalyses N-acetyl-alpha-D-glucosamine 1-phosphate + UTP + H(+) = UDP-N-acetyl-alpha-D-glucosamine + diphosphate. The protein operates within nucleotide-sugar biosynthesis; UDP-N-acetyl-alpha-D-glucosamine biosynthesis; N-acetyl-alpha-D-glucosamine 1-phosphate from alpha-D-glucosamine 6-phosphate (route II): step 2/2. It participates in nucleotide-sugar biosynthesis; UDP-N-acetyl-alpha-D-glucosamine biosynthesis; UDP-N-acetyl-alpha-D-glucosamine from N-acetyl-alpha-D-glucosamine 1-phosphate: step 1/1. It functions in the pathway bacterial outer membrane biogenesis; LPS lipid A biosynthesis. Catalyzes the last two sequential reactions in the de novo biosynthetic pathway for UDP-N-acetylglucosamine (UDP-GlcNAc). The C-terminal domain catalyzes the transfer of acetyl group from acetyl coenzyme A to glucosamine-1-phosphate (GlcN-1-P) to produce N-acetylglucosamine-1-phosphate (GlcNAc-1-P), which is converted into UDP-GlcNAc by the transfer of uridine 5-monophosphate (from uridine 5-triphosphate), a reaction catalyzed by the N-terminal domain. In Bacillus cereus (strain ATCC 14579 / DSM 31 / CCUG 7414 / JCM 2152 / NBRC 15305 / NCIMB 9373 / NCTC 2599 / NRRL B-3711), this protein is Bifunctional protein GlmU.